The following is a 76-amino-acid chain: DNA polymerase III subunit theta (76 aa).

In terms of assembly, the DNA polymerase holoenzyme is a complex that contains 10 different types of subunits. These subunits are organized into 3 functionally essential subassemblies: the pol III core, the beta sliding clamp processivity factor and the clamp-loading complex. The pol III core (subunits alpha,epsilon and theta) contains the polymerase and the 3'-5' exonuclease proofreading activities. The polymerase is tethered to the template via the sliding clamp processivity factor. The clamp-loading complex assembles the beta processivity factor onto the primer template and plays a central role in the organization and communication at the replication fork. This complex contains delta, delta', psi and chi, and copies of either or both of two different DnaX proteins, gamma and tau. The composition of the holoenzyme is, therefore: (alpha,epsilon,theta)[2]-(gamma/tau)[3]-delta,delta', psi,chi-beta[4].

The enzyme catalyses DNA(n) + a 2'-deoxyribonucleoside 5'-triphosphate = DNA(n+1) + diphosphate. DNA polymerase III is a complex, multichain enzyme responsible for most of the replicative synthesis in bacteria. This DNA polymerase also exhibits 3' to 5' exonuclease activity. In terms of biological role, the exact function of the theta subunit is unknown. The polypeptide is DNA polymerase III subunit theta (holE) (Escherichia coli O157:H7).